Consider the following 104-residue polypeptide: UPF0145 protein HCH_01985 (104 aa).

This sequence belongs to the UPF0145 family.

This is UPF0145 protein HCH_01985 from Hahella chejuensis (strain KCTC 2396).